A 291-amino-acid polypeptide reads, in one-letter code: 3-hydroxy-5-phosphonooxypentane-2,4-dione thiolase (291 aa).

The Schiff-base intermediate with substrate role is filled by K203.

The protein belongs to the DeoC/FbaB aldolase family. In terms of assembly, homodecamer.

The protein localises to the cytoplasm. It catalyses the reaction dihydroxyacetone phosphate + acetyl-CoA = 3-hydroxy-2,4-dioxopentyl phosphate + CoA. Its function is as follows. Involved in the degradation of phospho-AI-2, thereby terminating induction of the lsr operon and closing the AI-2 signaling cycle. Catalyzes the transfer of an acetyl moiety from 3-hydroxy-5-phosphonooxypentane-2,4-dione to CoA to form glycerone phosphate and acetyl-CoA. In Yersinia pseudotuberculosis serotype O:1b (strain IP 31758), this protein is 3-hydroxy-5-phosphonooxypentane-2,4-dione thiolase.